We begin with the raw amino-acid sequence, 310 residues long: Proline iminopeptidase (310 aa).

Residues 33 to 290 enclose the AB hydrolase-1 domain; the sequence is PVIFLHGGPG…RVVQAGHRAF (258 aa). Serine 107 serves as the catalytic Nucleophile. The active site involves aspartate 260. The Proton donor role is filled by histidine 287.

It belongs to the peptidase S33 family.

It is found in the cytoplasm. The enzyme catalyses Release of N-terminal proline from a peptide.. Functionally, specifically catalyzes the removal of N-terminal proline residues from peptides. This is Proline iminopeptidase (pip) from Neisseria meningitidis serogroup A / serotype 4A (strain DSM 15465 / Z2491).